Reading from the N-terminus, the 397-residue chain is Tryptophan synthase beta chain (397 aa).

Lys87 carries the post-translational modification N6-(pyridoxal phosphate)lysine.

This sequence belongs to the TrpB family. In terms of assembly, tetramer of two alpha and two beta chains. Pyridoxal 5'-phosphate is required as a cofactor.

It catalyses the reaction (1S,2R)-1-C-(indol-3-yl)glycerol 3-phosphate + L-serine = D-glyceraldehyde 3-phosphate + L-tryptophan + H2O. Its pathway is amino-acid biosynthesis; L-tryptophan biosynthesis; L-tryptophan from chorismate: step 5/5. The beta subunit is responsible for the synthesis of L-tryptophan from indole and L-serine. The sequence is that of Tryptophan synthase beta chain from Shigella boydii serotype 18 (strain CDC 3083-94 / BS512).